The chain runs to 155 residues: 3-hydroxyacyl-[acyl-carrier-protein] dehydratase FabZ (155 aa).

H58 is a catalytic residue.

The protein belongs to the thioester dehydratase family. FabZ subfamily.

Its subcellular location is the cytoplasm. The catalysed reaction is a (3R)-hydroxyacyl-[ACP] = a (2E)-enoyl-[ACP] + H2O. Its function is as follows. Involved in unsaturated fatty acids biosynthesis. Catalyzes the dehydration of short chain beta-hydroxyacyl-ACPs and long chain saturated and unsaturated beta-hydroxyacyl-ACPs. The sequence is that of 3-hydroxyacyl-[acyl-carrier-protein] dehydratase FabZ from Alkalilimnicola ehrlichii (strain ATCC BAA-1101 / DSM 17681 / MLHE-1).